The primary structure comprises 416 residues: Orexin/Hypocretin receptor type 1 (416 aa).

The segment at 1-22 is disordered; it reads MEPSATPGAQPGVPTSSGEPFH. Residues 1–46 lie on the Extracellular side of the membrane; sequence MEPSATPGAQPGVPTSSGEPFHLPPDYEDEFLRYLWRDYLYPKQYE. The tract at residues 26-41 is required for response to orexin-A; it reads DYEDEFLRYLWRDYLY. A helical transmembrane segment spans residues 47–67; that stretch reads WVLIAAYVAVFLIALVGNTLV. Over 68-82 the chain is Cytoplasmic; the sequence is CLAVWRNHHMRTVTN. Residues 83 to 105 traverse the membrane as a helical segment; that stretch reads YFIVNLSLADVLVTAICLPASLL. Over 106–119 the chain is Extracellular; sequence VDITESWLFGHALC. An intrachain disulfide couples cysteine 119 to cysteine 202. A helical transmembrane segment spans residues 120 to 140; the sequence is KVIPYLQAVSVSVAVLTLSFI. The Cytoplasmic portion of the chain corresponds to 141 to 160; it reads ALDRWYAICHPLLFKSTARR. The helical transmembrane segment at 161–182 threads the bilayer; it reads ARGSILGIWAVSLAVMVPQAAV. At 183-213 the chain is on the extracellular side; sequence MECSSVLPELANRTRLFSVCDERWADELYPK. Residue asparagine 194 is glycosylated (N-linked (GlcNAc...) asparagine). A helical membrane pass occupies residues 214 to 235; it reads IYHSCFFFVTYLAPLGLMGMAY. The Cytoplasmic segment spans residues 236–298; that stretch reads FQIFRKLWGP…QMRARRKTAK (63 aa). The chain crosses the membrane as a helical span at residues 299 to 321; the sequence is MLMVVLLVFALCYLPISVLNVLK. At 322–336 the chain is on the extracellular side; it reads RVFGMFRQASDREAV. The helical transmembrane segment at 337 to 360 threads the bilayer; sequence YACFTFSHWLVYANSAANPIIYNF. Residues 361-416 are Cytoplasmic-facing; it reads LSGKFREQFKAAFSCCLPGLGPSSSARHKSLSLQSRCSVSKVSEHVVLTTVTTVLS.

The protein belongs to the G-protein coupled receptor 1 family. Highly expressed in the brain in the prefrontal cortex, hippocampus, paraventricular thalamus, ventromedial hypothalamus, arcuate nucleus, dorsal raphe nucleus, and locus coeruleus. Not detected in the spleen, lung, liver, skeletal muscle, kidney and testis. Orexin receptor mRNA expression has also been reported in the adrenal gland, enteric nervous system, and pancreas.

Its subcellular location is the cell membrane. Moderately selective excitatory receptor for orexin-A and, with a lower affinity, for orexin-B neuropeptide. Triggers an increase in cytoplasmic Ca(2+) levels in response to orexin-A binding. This Rattus norvegicus (Rat) protein is Orexin/Hypocretin receptor type 1.